Consider the following 341-residue polypeptide: Phenylalanine--tRNA ligase alpha subunit (341 aa).

Residue Glu254 participates in Mg(2+) binding.

The protein belongs to the class-II aminoacyl-tRNA synthetase family. Phe-tRNA synthetase alpha subunit type 1 subfamily. As to quaternary structure, tetramer of two alpha and two beta subunits. The cofactor is Mg(2+).

The protein resides in the cytoplasm. It carries out the reaction tRNA(Phe) + L-phenylalanine + ATP = L-phenylalanyl-tRNA(Phe) + AMP + diphosphate + H(+). This is Phenylalanine--tRNA ligase alpha subunit from Chlorobium phaeobacteroides (strain DSM 266 / SMG 266 / 2430).